Here is a 291-residue protein sequence, read N- to C-terminus: Serine hydrolase BPHL (291 aa).

A signal peptide spans 1–37 (MATATVRPAAQRLRLLLSPLKSRICVPQAEPVATFGT). The AB hydrolase-1 domain occupies 62–173 (AILLLPGMLG…ANAYVTEEDS (112 aa)). The residue at position 74 (lysine 74) is an N6-acetyllysine; alternate. The residue at position 74 (lysine 74) is an N6-succinyllysine; alternate. Residues lysine 86 and lysine 119 each carry the N6-acetyllysine modification. Position 126 is an N6-acetyllysine; alternate (lysine 126). Position 126 is an N6-succinyllysine; alternate (lysine 126). The active-site Nucleophile is the serine 139. Residue lysine 184 is modified to N6-succinyllysine. Lysine 191 carries the post-translational modification N6-acetyllysine; alternate. Lysine 191 is subject to N6-succinyllysine; alternate. Lysine 217 is modified (N6-acetyllysine). Glutamate 221 provides a ligand contact to Mg(2+). Lysine 243 carries the N6-acetyllysine modification. Aspartate 244 serves as the catalytic Charge relay system. N6-acetyllysine; alternate is present on residues lysine 260 and lysine 271. Lysine 260 and lysine 271 each carry N6-succinyllysine; alternate. The active-site Charge relay system is histidine 272.

This sequence belongs to the AB hydrolase superfamily. Lipase family. As to quaternary structure, monomer. May also form homodimers.

It localises to the mitochondrion. It catalyses the reaction L-homocysteine thiolactone + H2O = L-homocysteine + H(+). It carries out the reaction valacyclovir + H2O = acyclovir + L-valine + H(+). Functionally, specific alpha-amino acid ester serine hydrolase that prefers small, hydrophobic, and aromatic side chains and does not have a stringent requirement for the leaving group other than preferring a primary alcohol. Has homocysteine-thiolactonase activity (in vitro) and may play a significant role in the detoxification of homocysteine thiolactone in vivo. Catalyzes the hydrolytic activation of amino acid ester prodrugs of nucleoside analogs such as valacyclovir and valganciclovir, converting them into their active forms (acyclovir and ganciclovir). This chain is Serine hydrolase BPHL (Bphl), found in Mus musculus (Mouse).